We begin with the raw amino-acid sequence, 94 residues long: Probable Fe(2+)-trafficking protein (94 aa).

Belongs to the Fe(2+)-trafficking protein family.

Could be a mediator in iron transactions between iron acquisition and iron-requiring processes, such as synthesis and/or repair of Fe-S clusters in biosynthetic enzymes. The protein is Probable Fe(2+)-trafficking protein of Marinomonas sp. (strain MWYL1).